The primary structure comprises 70 residues: DNA-directed RNA polymerase subunit omega (70 aa).

It belongs to the RNA polymerase subunit omega family. In terms of assembly, the RNAP catalytic core consists of 2 alpha, 1 beta, 1 beta' and 1 omega subunit. When a sigma factor is associated with the core the holoenzyme is formed, which can initiate transcription.

The enzyme catalyses RNA(n) + a ribonucleoside 5'-triphosphate = RNA(n+1) + diphosphate. Functionally, promotes RNA polymerase assembly. Latches the N- and C-terminal regions of the beta' subunit thereby facilitating its interaction with the beta and alpha subunits. In Shouchella clausii (strain KSM-K16) (Alkalihalobacillus clausii), this protein is DNA-directed RNA polymerase subunit omega.